An 808-amino-acid chain; its full sequence is Sucrose synthase 1 (808 aa).

The interval 277-754 (MVFNVVILSP…GLQRIEEKYT (478 aa)) is GT-B glycosyltransferase.

The protein belongs to the glycosyltransferase 1 family. Plant sucrose synthase subfamily. Homotetramer. Expressed in the phloem of leaves and in roots. Detected in the whole plant but more precisely confined to the vasculature in cotyledons, mature leaves and siliques.

The enzyme catalyses an NDP-alpha-D-glucose + D-fructose = a ribonucleoside 5'-diphosphate + sucrose + H(+). In terms of biological role, sucrose-cleaving enzyme that provides UDP-glucose and fructose for various metabolic pathways. The chain is Sucrose synthase 1 (SUS1) from Arabidopsis thaliana (Mouse-ear cress).